We begin with the raw amino-acid sequence, 469 residues long: 3-isopropylmalate dehydratase large subunit (469 aa).

Cys347, Cys407, and Cys410 together coordinate [4Fe-4S] cluster.

Belongs to the aconitase/IPM isomerase family. LeuC type 1 subfamily. As to quaternary structure, heterodimer of LeuC and LeuD. [4Fe-4S] cluster serves as cofactor.

The enzyme catalyses (2R,3S)-3-isopropylmalate = (2S)-2-isopropylmalate. Its pathway is amino-acid biosynthesis; L-leucine biosynthesis; L-leucine from 3-methyl-2-oxobutanoate: step 2/4. Catalyzes the isomerization between 2-isopropylmalate and 3-isopropylmalate, via the formation of 2-isopropylmaleate. In Prochlorococcus marinus subsp. pastoris (strain CCMP1986 / NIES-2087 / MED4), this protein is 3-isopropylmalate dehydratase large subunit.